The sequence spans 85 residues: MKLLLLLTISASMLIEGLVNADGYIRGGDGCKVSCVINHVFCDNECKAAGGSYGYCWAWGLACWCEGLPAEREWDYETNTCGGKK.

The N-terminal stretch at 1–21 (MKLLLLLTISASMLIEGLVNA) is a signal peptide. The region spanning 22-82 (DGYIRGGDGC…EWDYETNTCG (61 aa)) is the LCN-type CS-alpha/beta domain. Cystine bridges form between Cys-31-Cys-81, Cys-35-Cys-56, Cys-42-Cys-63, and Cys-46-Cys-65. The residue at position 82 (Gly-82) is a Glycine amide.

Belongs to the long (4 C-C) scorpion toxin superfamily. Sodium channel inhibitor family. Beta subfamily. Expressed by the venom gland.

The protein localises to the secreted. In terms of biological role, depressant insect beta-toxins cause a transient contraction paralysis followed by a slow flaccid paralysis. They bind voltage-independently at site-4 of sodium channels (Nav) and block action potentials, primarily by depolarizing the axonal membrane and suppressing the sodium current. This depressant toxin is active only on insects. It is found in a relatively small amount in the venom, and its activity on insects is 10-fold higher compared to other known depressant toxins. This chain is Beta-insect depressant toxin Lqh-dprIT3c, found in Leiurus hebraeus (Hebrew deathstalker scorpion).